The primary structure comprises 198 residues: Glycerol-3-phosphate acyltransferase (198 aa).

Helical transmembrane passes span 10–30, 57–77, 86–106, 118–138, and 160–180; these read LIPILFASYLIGSIPFSWILV, GISFLVLLLDIFKSVLVILIL, IMYLTGFTVVLGHIFPVWFLF, VVLSINIKIFFLFIITWAVVF, and AVTENFNSSIFYIAMSIIVLI.

This sequence belongs to the PlsY family. As to quaternary structure, probably interacts with PlsX.

The protein localises to the cell inner membrane. It catalyses the reaction an acyl phosphate + sn-glycerol 3-phosphate = a 1-acyl-sn-glycero-3-phosphate + phosphate. It participates in lipid metabolism; phospholipid metabolism. In terms of biological role, catalyzes the transfer of an acyl group from acyl-phosphate (acyl-PO(4)) to glycerol-3-phosphate (G3P) to form lysophosphatidic acid (LPA). This enzyme utilizes acyl-phosphate as fatty acyl donor, but not acyl-CoA or acyl-ACP. The chain is Glycerol-3-phosphate acyltransferase from Anaplasma marginale (strain St. Maries).